A 707-amino-acid chain; its full sequence is D-(-)-3-hydroxybutyrate oligomer hydrolase (707 aa).

The first 24 residues, 1 to 24 (MHHDNFRRLGNAAFAAAAALLAVA), serve as a signal peptide directing secretion. Serine 311 functions as the Charge relay system in the catalytic mechanism.

It belongs to the D-(-)-3-hydroxybutyrate oligomer hydrolase family.

It is found in the secreted. The catalysed reaction is (3R)-hydroxybutanoate dimer + H2O = 2 (R)-3-hydroxybutanoate + H(+). It participates in lipid metabolism; butanoate metabolism. Participates in the degradation of poly-3-hydroxybutyrate (PHB). It works downstream of poly(3-hydroxybutyrate) depolymerase, hydrolyzing D(-)-3-hydroxybutyrate oligomers of various length (3HB-oligomers) into 3HB-monomers. The protein is D-(-)-3-hydroxybutyrate oligomer hydrolase of Cupriavidus pinatubonensis (strain JMP 134 / LMG 1197) (Cupriavidus necator (strain JMP 134)).